A 493-amino-acid polypeptide reads, in one-letter code: V-type proton ATPase subunit B (493 aa).

It belongs to the ATPase alpha/beta chains family. In terms of assembly, V-ATPase is a heteromultimeric enzyme composed of a peripheral catalytic V1 complex (main components: subunits A, B, C, D, E, and F) attached to an integral membrane V0 proton pore complex (main component: the proteolipid protein).

The protein resides in the cytoplasmic vesicle membrane. Its subcellular location is the endosome membrane. It localises to the contractile vacuole membrane. Functionally, vacuolar ATPase is responsible for acidifying a variety of intracellular compartments in eukaryotic cells. The B subunit is non-catalytic but combines with other subunits to form the catalytic complex. V-ATPase is responsible for energizing electrophoretic K(+)/2H(+) antiport by generating a transmembrane voltage of more than 200 mV. This is V-type proton ATPase subunit B (vatB) from Dictyostelium discoideum (Social amoeba).